Consider the following 164-residue polypeptide: Telomerase-associated protein of 19 kDa (164 aa).

As to quaternary structure, component of the telomerase holoenzyme complex, composed of the catalytic core (the catalytic subunit TERT, the telomerase RNA template component TER and TAP65/p65), which is associated with two heterotrimeric subcomplexes: (i) the replication protein A (RPA)-related subcomplex, composed of TEB1, RPA2/TEB2 and RPA3/TEB3 and (ii) the CST-like subcomplex, composed of TAP75/p75, TAP45/p45 and TAP19/p19. TEB1 and the CST-like subcomplex are tethered to the catalytic core by TAP50/p50.

The protein localises to the chromosome. It is found in the telomere. Component of a CST-like subcomplex of the holoenzyme telomerase ribonucleoprotein complex, which stimulates telomerase complementary-strand synthesis. Telomerase is an essential ribonucleoprotein enzyme that copies new telomeric repeats onto chromosome ends by repetitively synthesizing the short telomere-repeat sequence 5'-TTGGGG-3' using an RNA template component TER. The CST-like subcomplex (also named 7-4-1) binds telomeric single-stranded DNA and coordinates telomere G-strand and C-strand synthesis. The chain is Telomerase-associated protein of 19 kDa from Tetrahymena thermophila (strain SB210).